The primary structure comprises 655 residues: p-hydroxybenzoic acid efflux pump subunit AaeB (655 aa).

Transmembrane regions (helical) follow at residues 13–33, 38–58, 69–89, 93–113, 121–141, 152–172, 370–390, 407–427, 431–451, 459–479, and 482–502; these read FAVK…HFQL, WAVL…GGEP, LRII…ISMI, LLMI…SSLV, WGLS…EPLL, EIVI…PRSI, LFWL…IAVV, FIYG…VIIP, QSML…GIEV, MGAL…TFHF, and FLDS…VILL.

It belongs to the aromatic acid exporter ArAE (TC 2.A.85) family.

It localises to the cell inner membrane. Forms an efflux pump with AaeA. Could function as a metabolic relief valve, allowing to eliminate certain compounds when they accumulate to high levels in the cell. The protein is p-hydroxybenzoic acid efflux pump subunit AaeB of Salmonella arizonae (strain ATCC BAA-731 / CDC346-86 / RSK2980).